Here is a 75-residue protein sequence, read N- to C-terminus: Small ribosomal subunit protein bS18c (75 aa).

This sequence belongs to the bacterial ribosomal protein bS18 family. As to quaternary structure, part of the 30S ribosomal subunit.

It is found in the plastid. The protein localises to the chloroplast. This Marchantia polymorpha (Common liverwort) protein is Small ribosomal subunit protein bS18c (rps18).